Consider the following 845-residue polypeptide: Complement component C7 (845 aa).

An N-terminal signal peptide occupies residues 1–22 (MQVTSLLILVCFIAAFQVFSRA). Residues 27–80 (NCKWDSYGPWSECNGCTKTQTRRRSVAVYGQYGGYPCEGSAFETQSCKPERGCP) form the TSP type-1 1 domain. 6 disulfide bridges follow: Cys-28–Cys-63, Cys-39–Cys-73, Cys-42–Cys-79, Cys-85–Cys-96, Cys-91–Cys-109, and Cys-103–Cys-119. One can recognise an LDL-receptor class A domain in the interval 84 to 120 (GCGDRFRCFSGQCISKSLVCNGDPDCEEDGADEDKCE). Residues 122-456 (VANPSCNIDK…EYFDEFDPCH (335 aa)) enclose the MACPF domain. Asn-124 is a glycosylation site (N-linked (GlcNAc...) asparagine). A disulfide bridge connects residues Cys-127 and Cys-164. N-linked (GlcNAc...) asparagine glycosylation occurs at Asn-201. Cystine bridges form between Cys-336–Cys-353, Cys-433–Cys-560, Cys-455–Cys-505, Cys-457–Cys-473, Cys-460–Cys-475, Cys-477–Cys-486, Cys-512–Cys-545, Cys-523–Cys-535, Cys-571–Cys-613, Cys-599–Cys-626, Cys-631–Cys-673, Cys-659–Cys-688, Cys-703–Cys-714, Cys-716–Cys-751, Cys-722–Cys-744, Cys-729–Cys-764, Cys-774–Cys-783, Cys-777–Cys-790, Cys-792–Cys-826, Cys-798–Cys-819, and Cys-806–Cys-839. Positions 457 to 487 (CRPCQNGGLAIVVETQCQCLCKPYTFGSACE) constitute an EGF-like domain. The TSP type-1 2 domain occupies 500-549 (DGGWNCWSSWSPCVQGKRTRSRECNNPPPRDDGKSCLGETTESKQCEDQD). 2 CCP regions span residues 545 to 615 (CEDQ…RCGE) and 616 to 693 (DLQW…QKAT). 2 Sushi domains span residues 569–628 (EFCL…HCQK) and 629–690 (LACV…KCVQ). Factor I module (FIM) regions lie at residues 695–771 (TPPP…SPAE) and 772–844 (KVCG…EEAA). Asn-755 is a glycosylation site (N-linked (GlcNAc...) asparagine).

This sequence belongs to the complement C6/C7/C8/C9 family. As to quaternary structure, monomer or dimer; as a C5b-7 complex it can also form multimeric rosettes. Component of the membrane attack complex (MAC), composed of complement C5b, C6, C7, C8A, C8B, C8G and multiple copies of the pore-forming subunit C9. Post-translationally, C-, N- and O-glycosylated. O-glycosylated with core 1 or possibly core 8 glycans.

It is found in the secreted. The protein resides in the target cell membrane. Its activity is regulated as follows. Membrane attack complex (MAC) assembly is inhibited by CD59, thereby protecting self-cells from damage during complement activation. MAC assembly is also inhibited by clusterin (CLU) chaperones that inhibit polymerization of C9. Component of the membrane attack complex (MAC), a multiprotein complex activated by the complement cascade, which inserts into a target cell membrane and forms a pore, leading to target cell membrane rupture and cell lysis. The MAC is initiated by proteolytic cleavage of C5 into complement C5b in response to the classical, alternative, lectin and GZMK complement pathways. The complement pathways consist in a cascade of proteins that leads to phagocytosis and breakdown of pathogens and signaling that strengthens the adaptive immune system. C7 serves as a membrane anchor. During MAC assembly, associates with C5b and C6 to form the C5b-7 complex, a key lipophilic precursor of the MAC complex, which associates with the outer leaflet and reduces the energy for membrane bending. The chain is Complement component C7 from Mus musculus (Mouse).